A 674-amino-acid chain; its full sequence is Inorganic pyrophosphatase TTM2 (674 aa).

Residues 248 to 410 (SPTYILKSRK…PRTYIEQIQL (163 aa)) enclose the CYTH domain. 2 disordered regions span residues 457-498 (KNLK…SPAN) and 619-640 (RSRLARTGSSNSGNRGRSSKSS). Positions 484 to 496 (SDRRYEERNHDSP) are enriched in basic and acidic residues. The span at 623-640 (ARTGSSNSGNRGRSSKSS) shows a compositional bias: low complexity. A helical transmembrane segment spans residues 650–670 (LPLVLTVAICSIGIIVIKSYI).

Mg(2+) is required as a cofactor. As to expression, predominantly expressed in the shoot apices of inflorescences.

The protein resides in the mitochondrion outer membrane. It carries out the reaction diphosphate + H2O = 2 phosphate + H(+). Its function is as follows. Exhibits pyrophosphatase activity with stronger affinity for pyrophosphate (PPi), moderate affinity for ATP and ADP, and weak affinity for tripolyphosphate (PPPi). No activity observed toward uridine substrate. Negative regulator of the salicylic acid (SA)-mediated amplification of defense responses against both virulent and avirulent pathogens, including oomycetes (e.g. H.arabidopsidis) and bacteria (e.g. P.syringae). Represses systemic acquired resistance (SAR). The polypeptide is Inorganic pyrophosphatase TTM2 (Arabidopsis thaliana (Mouse-ear cress)).